We begin with the raw amino-acid sequence, 221 residues long: Probable septum site-determining protein MinC (221 aa).

This sequence belongs to the MinC family. As to quaternary structure, interacts with MinD and FtsZ.

Cell division inhibitor that blocks the formation of polar Z ring septums. Rapidly oscillates between the poles of the cell to destabilize FtsZ filaments that have formed before they mature into polar Z rings. Prevents FtsZ polymerization. The protein is Probable septum site-determining protein MinC of Shewanella woodyi (strain ATCC 51908 / MS32).